Reading from the N-terminus, the 211-residue chain is External core antigen (211 aa).

The signal sequence occupies residues 1–19 (MHLFHLCLIILCSCPTVQA). Positions 25-27 (GWL) are HBEAG. Residues 165–211 (NAPILSTLPETTVVRRRRPSGRRTPSPRRRRSQSPRRRRSQSPASSC) form a disordered region. A compositionally biased stretch (basic residues) spans 178–204 (VRRRRPSGRRTPSPRRRRSQSPRRRRS). Residues 183–189 (PSGRRTP) form a 1; half-length repeat. The interval 183 to 205 (PSGRRTPSPRRRRSQSPRRRRSQ) is 3 X 8 AA repeats of S-P-R-R-R-R-S-Q. A propeptide spanning residues 183–211 (PSGRRTPSPRRRRSQSPRRRRSQSPASSC) is cleaved from the precursor. 2 tandem repeats follow at residues 190–197 (SPRRRRSQ) and 198–205 (SPRRRRSQ).

It belongs to the orthohepadnavirus precore antigen family. As to quaternary structure, homodimerizes. In terms of processing, phosphorylated. Post-translationally, cleaved by host furin.

The protein resides in the secreted. Its subcellular location is the host nucleus. In terms of biological role, may regulate immune response to the intracellular capsid in acting as a T-cell tolerogen, by having an immunoregulatory effect which prevents destruction of infected cells by cytotoxic T-cells. This immune regulation may predispose to chronicity during perinatal infections and prevent severe liver injury during adult infections. The sequence is that of External core antigen from Woolly monkey hepatitis B virus (isolate Louisville) (WMHBV).